Reading from the N-terminus, the 156-residue chain is 6,7-dimethyl-8-ribityllumazine synthase (156 aa).

5-amino-6-(D-ribitylamino)uracil-binding positions include Phe25, 59–61, and 83–85; these read AFE and AVI. (2S)-2-hydroxy-3-oxobutyl phosphate is bound at residue 88 to 89; sequence AT. Residue His91 is the Proton donor of the active site. Position 116 (Phe116) interacts with 5-amino-6-(D-ribitylamino)uracil. Residue Arg130 participates in (2S)-2-hydroxy-3-oxobutyl phosphate binding.

The protein belongs to the DMRL synthase family.

It catalyses the reaction (2S)-2-hydroxy-3-oxobutyl phosphate + 5-amino-6-(D-ribitylamino)uracil = 6,7-dimethyl-8-(1-D-ribityl)lumazine + phosphate + 2 H2O + H(+). The protein operates within cofactor biosynthesis; riboflavin biosynthesis; riboflavin from 2-hydroxy-3-oxobutyl phosphate and 5-amino-6-(D-ribitylamino)uracil: step 1/2. Functionally, catalyzes the formation of 6,7-dimethyl-8-ribityllumazine by condensation of 5-amino-6-(D-ribitylamino)uracil with 3,4-dihydroxy-2-butanone 4-phosphate. This is the penultimate step in the biosynthesis of riboflavin. This is 6,7-dimethyl-8-ribityllumazine synthase from Nitratidesulfovibrio vulgaris (strain DSM 19637 / Miyazaki F) (Desulfovibrio vulgaris).